The sequence spans 624 residues: MVMSHIFLISQIQEVEHGDSDDVNWNTDDDELAIDNFQFSPSPVHISATSPNSIQNRISDETVASFVEMGFSTQMIARAIEETAGANMEPMMILETLFNYSASTEASSSKSKVINHFIAMGFPEEHVIKAMQEHGDEDVGEITNALLTYAEVDKLRESEDMNININDDDDDNLYSLSSDDEEDELNNSSNEDRILQALIKMGYLREDAAIAIERCGEDASMEEVVDFICAAQMARQFDEIYAEPDKKELMNNNKKRRTYTETPRKPNTDQLISLPKEMIGFGVPNHPGLMMHRPVPIPDIARGPPFFYYENVAMTPKGVWAKISSHLYDIVPEFVDSKHFCAAARKRGYIHNLPIQNRFQIQPPQHNTIQEAFPLTKRWWPSWDGRTKLNCLLTCIASSRLTEKIREALERYDGETPLDVQKWVMYECKKWNLVWVGKNKLAPLDADEMEKLLGFPRDHTRGGGISTTDRYKSLGNSFQVDTVAYHLSVLKPLFPNGINVLSLFTGIGGGEVALHRLQIKMNVVVSVEISDANRNILRSFWEQTNQKGILREFKDVQKLDDNTIERLMDEYGGFDLVIGGSPCNNLAGGNRHHRVGLGGEHSSLFFDYCRILEAVRRKARHMRR.

UBA domains lie at 57–100 and 108–149; these read RISD…LFNY and SSKS…LLTY. The disordered stretch occupies residues 160-189; that stretch reads DMNININDDDDDNLYSLSSDDEEDELNNSS. Over residues 166–185 the composition is skewed to acidic residues; that stretch reads NDDDDDNLYSLSSDDEEDEL. Residues 188-231 enclose the UBA 3 domain; the sequence is SSNEDRILQALIKMGYLREDAAIAIERCGEDASMEEVVDFICAA. The SAM-dependent MTase DRM-type domain maps to 291 to 622; it reads MHRPVPIPDI…EAVRRKARHM (332 aa).

This sequence belongs to the class I-like SAM-binding methyltransferase superfamily. DRM-methyltransferase family.

Its subcellular location is the nucleus. It catalyses the reaction a 2'-deoxycytidine in DNA + S-adenosyl-L-methionine = a 5-methyl-2'-deoxycytidine in DNA + S-adenosyl-L-homocysteine + H(+). Functionally, involved in de novo DNA methylation. Controls asymmetric and CpNpG methylation. Required for FWA gene silencing but not for the maintenance of SUP gene silencing. Functionally redundant to CMT3 to maintain non-CpG methylation. Involved in RNA-directed DNA methylation. This is DNA (cytosine-5)-methyltransferase DRM1 (DRM1) from Arabidopsis thaliana (Mouse-ear cress).